A 907-amino-acid chain; its full sequence is Lipoxygenase 1, chloroplastic (907 aa).

A chloroplast-targeting transit peptide spans M1 to V49. Residues D85–T209 form the PLAT domain. Residues P212–I907 enclose the Lipoxygenase domain. Fe cation-binding residues include H567, H572, H758, N762, and I907.

Belongs to the lipoxygenase family. The cofactor is Fe cation. Confined to glandular trichomes in flowers, and, at low levels, in leaves.

It localises to the plastid. The protein resides in the chloroplast. The catalysed reaction is (9Z,12Z,15Z)-octadecatrienoate + O2 = 13-hydroperoxy-(9Z,11E,15Z)-octadecatrienoate. It participates in lipid metabolism; oxylipin biosynthesis. Its pathway is isoprenoid biosynthesis. Component of the monoterpenoid pyrethrins biosynthesis; pyrethrins are widely used plant-derived pesticide. Plant lipoxygenases may be involved in a number of diverse aspects of plant physiology including growth and development, pest resistance, and senescence or responses to wounding. Catalyzes the hydroperoxidation of lipids containing a cis,cis-1,4-pentadiene structure. Mediates the peroxidation of linolenic acid leading to the production of 13-hydroperoxylinolenic acid. This is Lipoxygenase 1, chloroplastic from Tanacetum cinerariifolium (Dalmatian daisy).